A 510-amino-acid chain; its full sequence is Bifunctional purine biosynthesis protein PurH (510 aa).

One can recognise an MGS-like domain in the interval 1-145 (MSKRALISVS…KNFEDVLVVT (145 aa)).

This sequence belongs to the PurH family.

It catalyses the reaction (6R)-10-formyltetrahydrofolate + 5-amino-1-(5-phospho-beta-D-ribosyl)imidazole-4-carboxamide = 5-formamido-1-(5-phospho-D-ribosyl)imidazole-4-carboxamide + (6S)-5,6,7,8-tetrahydrofolate. It carries out the reaction IMP + H2O = 5-formamido-1-(5-phospho-D-ribosyl)imidazole-4-carboxamide. Its pathway is purine metabolism; IMP biosynthesis via de novo pathway; 5-formamido-1-(5-phospho-D-ribosyl)imidazole-4-carboxamide from 5-amino-1-(5-phospho-D-ribosyl)imidazole-4-carboxamide (10-formyl THF route): step 1/1. The protein operates within purine metabolism; IMP biosynthesis via de novo pathway; IMP from 5-formamido-1-(5-phospho-D-ribosyl)imidazole-4-carboxamide: step 1/1. The sequence is that of Bifunctional purine biosynthesis protein PurH from Oceanobacillus iheyensis (strain DSM 14371 / CIP 107618 / JCM 11309 / KCTC 3954 / HTE831).